The chain runs to 559 residues: POU domain protein 1 (559 aa).

The POU-specific domain maps to 259 to 333 (EDLPSSDDLE…LLQKWLHEAD (75 aa)). The homeobox DNA-binding region spans 351 to 410 (KRKKRTSIEANVKSILESSFMKLSKPSAQDISSLAEKLSLEKEVVRVWFCNRRQKEKRIT).

Belongs to the POU transcription factor family.

The protein resides in the nucleus. In Dugesia japonica (Planarian), this protein is POU domain protein 1 (POU1).